A 728-amino-acid polypeptide reads, in one-letter code: Glycine--tRNA ligase (728 aa).

The transit peptide at 1–32 directs the protein to the mitochondrion; the sequence is MPCLLPTLLRATRAALLLQSPRVVAAPASQRL. Residues 52 to 108 form the WHEP-TRS domain; the sequence is LLAPLRLAVRQQGDFVRKLKEDKAPQVDVDRAVAELKARKRVLEAKELALQPKDDIV. At Lys193 the chain carries N6-acetyllysine. Residue Glu288 participates in glycine binding. ATP contacts are provided by residues 320–322 and 331–332; these read RNE and RV. Glu339 serves as a coordination point for glycine. Tyr442 carries the phosphotyrosine modification. 446–447 serves as a coordination point for ATP; it reads EI. Lys490 is subject to N6-acetyllysine. Residue 565–567 participates in glycine binding; that stretch reads EPS. Arg572 lines the ATP pocket. Ser689 is modified (phosphoserine). Position 725 is a phosphothreonine (Thr725).

Belongs to the class-II aminoacyl-tRNA synthetase family. In terms of assembly, homodimer.

The protein localises to the cytoplasm. It localises to the mitochondrion. It is found in the cell projection. The protein resides in the axon. Its subcellular location is the secreted. The protein localises to the extracellular exosome. The catalysed reaction is tRNA(Gly) + glycine + ATP = glycyl-tRNA(Gly) + AMP + diphosphate. It catalyses the reaction 2 ATP + H(+) = P(1),P(4)-bis(5'-adenosyl) tetraphosphate + diphosphate. Functionally, catalyzes the ATP-dependent ligation of glycine to the 3'-end of its cognate tRNA, via the formation of an aminoacyl-adenylate intermediate (Gly-AMP). Also produces diadenosine tetraphosphate (Ap4A), a universal pleiotropic signaling molecule needed for cell regulation pathways, by direct condensation of 2 ATPs. Thereby, may play a special role in Ap4A homeostasis. This chain is Glycine--tRNA ligase (Gars1), found in Rattus norvegicus (Rat).